The chain runs to 376 residues: Ribonucleoside-diphosphate reductase subunit beta (376 aa).

Fe cation is bound by residues Asp-85, Glu-116, and His-119. The active site involves Tyr-123. Positions 205, 239, and 242 each coordinate Fe cation.

This sequence belongs to the ribonucleoside diphosphate reductase small chain family. Tetramer of two alpha and two beta subunits. It depends on Fe cation as a cofactor.

The catalysed reaction is a 2'-deoxyribonucleoside 5'-diphosphate + [thioredoxin]-disulfide + H2O = a ribonucleoside 5'-diphosphate + [thioredoxin]-dithiol. In terms of biological role, provides the precursors necessary for DNA synthesis. Catalyzes the biosynthesis of deoxyribonucleotides from the corresponding ribonucleotides. This Buchnera aphidicola subsp. Schizaphis graminum (strain Sg) protein is Ribonucleoside-diphosphate reductase subunit beta (nrdB).